We begin with the raw amino-acid sequence, 300 residues long: 17-beta-hydroxysteroid dehydrogenase 13 (300 aa).

Residues 1–19 (MNLILELLLLVGIIIYSYL) form the signal peptide. At Ser33 the chain carries Phosphoserine. Residue 40–67 (LITGAGHGIGRLTAYEFAKQKSRLVLWD) coordinates NAD(+). Ser69 carries the post-translational modification Phosphoserine. N6-acetyllysine is present on Lys79. Ser172 provides a ligand contact to substrate. Tyr185 functions as the Proton acceptor in the catalytic mechanism. Lys189 lines the NAD(+) pocket.

The protein belongs to the short-chain dehydrogenases/reductases (SDR) family.

It is found in the lipid droplet. It localises to the endoplasmic reticulum. The enzyme catalyses 17beta-estradiol + NAD(+) = estrone + NADH + H(+). The catalysed reaction is all-trans-retinol + NAD(+) = all-trans-retinal + NADH + H(+). It carries out the reaction all-trans-retinal + NAD(+) + H2O = all-trans-retinoate + NADH + 2 H(+). Plays a pivotal role in hepatic lipid metabolism. In vitro, it catalyzes the oxidation of a variety of lipid substrates, including 17beta-estradiol, retinol, retinal, and leukotriene B4. The protein is 17-beta-hydroxysteroid dehydrogenase 13 (Hsd17b13) of Rattus norvegicus (Rat).